We begin with the raw amino-acid sequence, 454 residues long: Glutamyl-tRNA reductase (454 aa).

Substrate is bound by residues 50 to 53 (TCNR), serine 103, 108 to 110 (EDQ), and glutamine 114. The Nucleophile role is filled by cysteine 51. 182–187 (GAGEMG) lines the NADP(+) pocket. Residues 407-454 (LFDPNFGGDTPQPDRPDDIPRAAERGDISGDDLPDDVPNHIAEKVSDG) are disordered. Composition is skewed to basic and acidic residues over residues 418–434 (QPDR…RGDI) and 443–454 (VPNHIAEKVSDG).

It belongs to the glutamyl-tRNA reductase family. As to quaternary structure, homodimer.

The enzyme catalyses (S)-4-amino-5-oxopentanoate + tRNA(Glu) + NADP(+) = L-glutamyl-tRNA(Glu) + NADPH + H(+). Its pathway is porphyrin-containing compound metabolism; protoporphyrin-IX biosynthesis; 5-aminolevulinate from L-glutamyl-tRNA(Glu): step 1/2. Its function is as follows. Catalyzes the NADPH-dependent reduction of glutamyl-tRNA(Glu) to glutamate 1-semialdehyde (GSA). The protein is Glutamyl-tRNA reductase of Haloquadratum walsbyi (strain DSM 16790 / HBSQ001).